We begin with the raw amino-acid sequence, 409 residues long: Magnesium-protoporphyrin IX monomethyl ester [oxidative] cyclase, chloroplastic (409 aa).

Disordered regions lie at residues 1 to 23 and 36 to 60; these read MAAE…SNPS and RMSA…TKKE. A chloroplast-targeting transit peptide spans 1 to 36; the sequence is MAAEMALVKPISKFSSPKLSNPSKFLSGRRFSTVIR. Residues 13 to 23 are compositionally biased toward polar residues; the sequence is KFSSPKLSNPS.

Belongs to the AcsF family. Part of the FLU-containing chloroplast membrane complex composed of FLU, CRD1, PORB, PORC, CHLP and HEMA1. Interacts with YCF54 in chloroplasts. Fe cation is required as a cofactor.

It localises to the plastid. Its subcellular location is the chloroplast inner membrane. The protein localises to the chloroplast thylakoid membrane. It catalyses the reaction Mg-protoporphyrin IX 13-monomethyl ester + 3 NADPH + 3 O2 + 2 H(+) = 3,8-divinyl protochlorophyllide a + 3 NADP(+) + 5 H2O. It functions in the pathway porphyrin-containing compound metabolism; chlorophyll biosynthesis. Its function is as follows. Catalytic component of the MgProto monomethylester (MgProtoME) cyclase complex that catalyzes the formation of the isocyclic ring in chlorophyll biosynthesis. Mediates the cyclase reaction, which results in the formation of divinylprotochlorophyllide (Pchlide) characteristic of all chlorophylls from magnesium-protoporphyrin IX 13-monomethyl ester (MgPMME). The chain is Magnesium-protoporphyrin IX monomethyl ester [oxidative] cyclase, chloroplastic from Arabidopsis thaliana (Mouse-ear cress).